The following is a 364-amino-acid chain: NADH-quinone oxidoreductase subunit H (364 aa).

8 consecutive transmembrane segments (helical) span residues 21-41 (AGQILAVMIWILLSLAFLLLA), 88-108 (VFLLAPLISFTLAFAAWAVIP), 120-140 (VGILYLFAISSLGVYGIIMGG), 159-179 (MVSYEVSIGFIIITVILLAGS), 208-228 (LPLLLVMVPMAVIFFISGLAE), 267-287 (IVLICAMTTILFFGGWSAPFP), 301-321 (FYYFMWFFLKVIFFFFLVSMA), and 340-360 (VFLPFSLVCVALIAAWRVFGP).

This sequence belongs to the complex I subunit 1 family. NDH-1 is composed of 14 different subunits. Subunits NuoA, H, J, K, L, M, N constitute the membrane sector of the complex.

Its subcellular location is the cell inner membrane. It carries out the reaction a quinone + NADH + 5 H(+)(in) = a quinol + NAD(+) + 4 H(+)(out). NDH-1 shuttles electrons from NADH, via FMN and iron-sulfur (Fe-S) centers, to quinones in the respiratory chain. The immediate electron acceptor for the enzyme in this species is believed to be ubiquinone. Couples the redox reaction to proton translocation (for every two electrons transferred, four hydrogen ions are translocated across the cytoplasmic membrane), and thus conserves the redox energy in a proton gradient. This subunit may bind ubiquinone. The chain is NADH-quinone oxidoreductase subunit H from Phenylobacterium zucineum (strain HLK1).